Consider the following 107-residue polypeptide: Glutaredoxin 4 (107 aa).

Positions 4 to 106 constitute a Glutaredoxin domain; it reads LDKIKKQISE…TLLAEVAAKH (103 aa). Lys21 provides a ligand contact to glutathione. Cys29 provides a ligand contact to [2Fe-2S] cluster. Glutathione-binding positions include Arg58, Phe70, and 83–84; that span reads CD.

Belongs to the glutaredoxin family. Monothiol subfamily. Homodimer.

The protein localises to the cytoplasm. Its function is as follows. Monothiol glutaredoxin involved in the biogenesis of iron-sulfur clusters. The sequence is that of Glutaredoxin 4 (grxD) from Haemophilus influenzae (strain 86-028NP).